A 697-amino-acid polypeptide reads, in one-letter code: Elongation factor G (697 aa).

The tr-type G domain occupies 8-282 (EDYRNIGIMA…AVVDYLPSPL (275 aa)). GTP is bound by residues 17–24 (AHIDAGKT), 81–85 (DTPGH), and 135–138 (NKMD).

Belongs to the TRAFAC class translation factor GTPase superfamily. Classic translation factor GTPase family. EF-G/EF-2 subfamily.

It localises to the cytoplasm. Catalyzes the GTP-dependent ribosomal translocation step during translation elongation. During this step, the ribosome changes from the pre-translocational (PRE) to the post-translocational (POST) state as the newly formed A-site-bound peptidyl-tRNA and P-site-bound deacylated tRNA move to the P and E sites, respectively. Catalyzes the coordinated movement of the two tRNA molecules, the mRNA and conformational changes in the ribosome. The polypeptide is Elongation factor G (Mycoplasmopsis agalactiae (strain NCTC 10123 / CIP 59.7 / PG2) (Mycoplasma agalactiae)).